Here is a 122-residue protein sequence, read N- to C-terminus: Beta-2-microglobulin (122 aa).

The N-terminal stretch at methionine 1–alanine 23 is a signal peptide. Positions proline 28 to threonine 117 constitute an Ig-like C1-type domain. Cysteine 48 and cysteine 103 are oxidised to a cystine.

It belongs to the beta-2-microglobulin family. As to quaternary structure, heterodimer of an alpha chain and a beta chain. Beta-2-microglobulin is the beta-chain of major histocompatibility complex class I molecules.

It is found in the secreted. Its function is as follows. Component of the class I major histocompatibility complex (MHC). Involved in the presentation of peptide antigens to the immune system. The polypeptide is Beta-2-microglobulin (b2m) (Acipenser baerii (Siberian sturgeon)).